Reading from the N-terminus, the 390-residue chain is F-box/kelch-repeat protein At3g04660 (390 aa).

In terms of domain architecture, F-box spans 18–67; sequence YDPSSILPLELKIEILMKSPPKSIAKLGFVSNHWSSIIRGQVFTDLYMRR. 2 Kelch repeats span residues 115 to 161 and 272 to 323; these read FSPP…FGYD and MVDH…DQRV.

In terms of assembly, part of a SCF (ASK-cullin-F-box) protein ligase complex. Interacts with SKP1A/ASK1, SKP1B/ASK2, ASK11 and ASK13.

The protein localises to the nucleus. It participates in protein modification; protein ubiquitination. In terms of biological role, component of SCF(ASK-cullin-F-box) E3 ubiquitin ligase complexes, which may mediate the ubiquitination and subsequent proteasomal degradation of target proteins. In Arabidopsis thaliana (Mouse-ear cress), this protein is F-box/kelch-repeat protein At3g04660.